An 89-amino-acid chain; its full sequence is Neuropeptide F (89 aa).

The signal sequence occupies residues Met-1–Ala-29. Phe-61 is subject to Phenylalanine amide. The propeptide occupies Gly-65–Arg-89.

Belongs to the NPY family.

The protein resides in the secreted. In terms of biological role, an integral part of the sensory system that mediates food signaling, providing the neural basis for the regulation of food response; coordinates larval foraging and social behavior changes during development. May have a hormonal role in females. The protein is Neuropeptide F of Anopheles gambiae (African malaria mosquito).